The chain runs to 236 residues: MITLPARPESLTFAPQQSALIVVDMQNAYASQGGYLDLAGFDVSATRPVIVNINTAVAAARAAGMLIIWFQNGWDDQYVEAGGPGSPNYHKSNALKTMRQRPELQGKLLAKGGWDYQLVDELTPQEGDIVLPKPRYSGFFNTPLDSILRSRGIRHLVFTGIATNVCVESTLRDGFFLEYFGIVLEDATHQAGPAFAQQAALFNIETFFGWVSDVESFCHALSPATPLSLAKEKRYA.

Residue D24 is the Proton acceptor of the active site. K133 is an active-site residue. C166 functions as the Nucleophile in the catalytic mechanism.

This sequence belongs to the isochorismatase family. RutB subfamily.

The enzyme catalyses (Z)-3-ureidoacrylate + H2O + H(+) = (Z)-3-aminoacrylate + NH4(+) + CO2. The catalysed reaction is (Z)-3-ureidoacrylate + H2O = (Z)-3-aminoacrylate + carbamate + H(+). It catalyses the reaction (Z)-2-methylureidoacrylate + H2O + H(+) = (Z)-2-methylaminoacrylate + NH4(+) + CO2. Hydrolyzes ureidoacrylate to form aminoacrylate and carbamate. The carbamate hydrolyzes spontaneously, thereby releasing one of the nitrogen atoms of the pyrimidine ring as ammonia and one of its carbon atoms as CO2. The sequence is that of Ureidoacrylate amidohydrolase RutB from Klebsiella pneumoniae (strain 342).